We begin with the raw amino-acid sequence, 173 residues long: Alpha-crystallin A chain (173 aa).

Methionine 1 is modified (N-acetylmethionine). Residues 1–63 (MDIAIQHPWF…RTVLDSGISE (63 aa)) form a required for complex formation with BFSP1 and BFSP2 region. Deamidated glutamine; partial is present on glutamine 6. Serine 45 is subject to Phosphoserine. Glutamine 50 carries the deamidated glutamine; partial modification. A sHSP domain is found at 52–162 (LFRTVLDSGI…GHSERAIPVS (111 aa)). Lysine 70 is modified (N6-acetyllysine). Position 90 is a deamidated glutamine; partial (glutamine 90). An N6-acetyllysine modification is found at lysine 99. Histidine 100 lines the Zn(2+) pocket. Asparagine 101 is subject to Deamidated asparagine; partial. Glutamate 102 and histidine 107 together coordinate Zn(2+). Serine 122 bears the Phosphoserine mark. Asparagine 123 carries the deamidated asparagine; partial modification. The segment at 144-173 (PKVPSGVDAGHSERAIPVSREEKPSSAPSS) is disordered. Over residues 153-167 (GHSERAIPVSREEKP) the composition is skewed to basic and acidic residues. Residue histidine 154 coordinates Zn(2+). The O-linked (GlcNAc) serine glycan is linked to serine 162.

The protein belongs to the small heat shock protein (HSP20) family. In terms of assembly, heteromer composed of three CRYAA and one CRYAB subunits. Inter-subunit bridging via zinc ions enhances stability, which is crucial as there is no protein turn over in the lens. Can also form homodimers and homotetramers (dimers of dimers) which serve as the building blocks of homooligomers. Within homooligomers, the zinc-binding motif is created from residues of 3 different molecules. His-100 and Glu-102 from one molecule are ligands of the zinc ion, and His-107 and His-154 residues from additional molecules complete the site with tetrahedral coordination geometry. Part of a complex required for lens intermediate filament formation composed of BFSP1, BFSP2 and CRYAA. Acetylation at Lys-70 may increase chaperone activity. Post-translationally, undergoes age-dependent proteolytical cleavage at the C-terminus.

The protein localises to the cytoplasm. It localises to the nucleus. Its function is as follows. Contributes to the transparency and refractive index of the lens. Acts as a chaperone, preventing aggregation of various proteins under a wide range of stress conditions. Required for the correct formation of lens intermediate filaments as part of a complex composed of BFSP1, BFSP2 and CRYAA. The protein is Alpha-crystallin A chain (CRYAA) of Ovis aries (Sheep).